Consider the following 249-residue polypeptide: Major phosphate-irrepressible acid phosphatase (249 aa).

Positions Met-1–Ala-20 are cleaved as a signal peptide.

The protein belongs to the class A bacterial acid phosphatase family. Homotetramer.

The protein localises to the periplasm. It catalyses the reaction a phosphate monoester + H2O = an alcohol + phosphate. In Morganella morganii (Proteus morganii), this protein is Major phosphate-irrepressible acid phosphatase (phoC).